We begin with the raw amino-acid sequence, 270 residues long: Insulin-like growth factor-binding protein-like 1 (270 aa).

The N-terminal stretch at M1–G17 is a signal peptide. Residues R26 to A101 enclose the IGFBP N-terminal domain. Disulfide bonds link C30-C55, C33-C57, C38-C58, C44-C61, C69-C83, C77-C98, and C107-C143. The Kazal-like domain occupies A87–F145. The Ig-like C2-type domain occupies P147 to T251. The N-linked (GlcNAc...) asparagine glycan is linked to N158. A disulfide bridge links C168 with C235.

It localises to the secreted. Functionally, IGF-binding proteins prolong the half-life of IGFs and have been shown to either inhibit or stimulate the growth promoting effects of the IGFs in cell culture. They alter the interaction of IGFs with their cell surface receptors. The protein is Insulin-like growth factor-binding protein-like 1 (Igfbpl1) of Mus musculus (Mouse).